Consider the following 124-residue polypeptide: Small ribosomal subunit protein uS12 (124 aa).

Residues 1-22 (MATVNQLVRKPRQKPDAKSNVA) are disordered. A 3-methylthioaspartic acid modification is found at Asp89.

It belongs to the universal ribosomal protein uS12 family. In terms of assembly, part of the 30S ribosomal subunit. Contacts proteins S8 and S17. May interact with IF1 in the 30S initiation complex.

Its function is as follows. With S4 and S5 plays an important role in translational accuracy. Interacts with and stabilizes bases of the 16S rRNA that are involved in tRNA selection in the A site and with the mRNA backbone. Located at the interface of the 30S and 50S subunits, it traverses the body of the 30S subunit contacting proteins on the other side and probably holding the rRNA structure together. The combined cluster of proteins S8, S12 and S17 appears to hold together the shoulder and platform of the 30S subunit. This is Small ribosomal subunit protein uS12 from Pseudoalteromonas atlantica (strain T6c / ATCC BAA-1087).